A 176-amino-acid chain; its full sequence is Translation initiation factor IF-3 (176 aa).

The protein belongs to the IF-3 family. Monomer.

The protein localises to the cytoplasm. IF-3 binds to the 30S ribosomal subunit and shifts the equilibrium between 70S ribosomes and their 50S and 30S subunits in favor of the free subunits, thus enhancing the availability of 30S subunits on which protein synthesis initiation begins. This chain is Translation initiation factor IF-3, found in Nitratidesulfovibrio vulgaris (strain DSM 19637 / Miyazaki F) (Desulfovibrio vulgaris).